The chain runs to 579 residues: Protein inscuteable homolog (579 aa).

Residues 74-89 (SVQRWMEDLKLMTECE) form an important for interaction with GPSM2 region. Residues 576–579 (ESFV) carry the PDZ-binding motif.

In terms of assembly, interacts with ALS2CR19/PAR3B and GPSM1/AGS3. Interacts with F2RL2/PAR3. Interacts with GPSM2/LGN (via TPR repeat region). In terms of tissue distribution, expressed in brain, kidney, liver, testis and skin.

It localises to the cytoplasm. Its subcellular location is the cell cortex. Its function is as follows. May function as an adapter linking the Par3 complex to the GPSM1/GPSM2 complex. Involved in spindle orientation during mitosis. May regulate cell proliferation and differentiation in the developing nervous system. May play a role in the asymmetric division of fibroblasts and participate in the process of stratification of the squamous epithelium. This chain is Protein inscuteable homolog (Insc), found in Mus musculus (Mouse).